A 334-amino-acid chain; its full sequence is MNALPIRTAAPSGHSGGHSSTGTHVPVLLNEVLETLSPAPGGVFLDGTFGGGGYTRAILDTAEDSTVWAVDRDPAAITRGEALAARYRGRLHLIQGNFSQMASLLTDRGVNALDGIVLDIGVSSFQIDDPDRGFSFRTDGPLDMRMAGEGTSAADLIARLPEAEIANILYELGEERKSRQIARAIVSARAEEPITTTGRLASIIRCVVPPDRSGIDPATRSFQALRIAVNDELGELERALQQATNLLQPGGRLVIVSFHSLEDRIVKRFMNDAAGNAPSPSRYDPRGLVARTEPRFRLITSKAVRPGTAEQNANPRSRSARLRAIECLRRETTP.

The segment at 1–21 (MNALPIRTAAPSGHSGGHSST) is disordered. S-adenosyl-L-methionine contacts are provided by residues 52–54 (GGY), aspartate 71, phenylalanine 98, aspartate 119, and glutamine 126.

It belongs to the methyltransferase superfamily. RsmH family.

Its subcellular location is the cytoplasm. It catalyses the reaction cytidine(1402) in 16S rRNA + S-adenosyl-L-methionine = N(4)-methylcytidine(1402) in 16S rRNA + S-adenosyl-L-homocysteine + H(+). In terms of biological role, specifically methylates the N4 position of cytidine in position 1402 (C1402) of 16S rRNA. This is Ribosomal RNA small subunit methyltransferase H from Granulibacter bethesdensis (strain ATCC BAA-1260 / CGDNIH1).